A 934-amino-acid chain; its full sequence is Glycine dehydrogenase (decarboxylating) (934 aa).

N6-(pyridoxal phosphate)lysine is present on Lys687.

It belongs to the GcvP family. The glycine cleavage system is composed of four proteins: P, T, L and H. The cofactor is pyridoxal 5'-phosphate.

The catalysed reaction is N(6)-[(R)-lipoyl]-L-lysyl-[glycine-cleavage complex H protein] + glycine + H(+) = N(6)-[(R)-S(8)-aminomethyldihydrolipoyl]-L-lysyl-[glycine-cleavage complex H protein] + CO2. The glycine cleavage system catalyzes the degradation of glycine. The P protein binds the alpha-amino group of glycine through its pyridoxal phosphate cofactor; CO(2) is released and the remaining methylamine moiety is then transferred to the lipoamide cofactor of the H protein. This Nocardia farcinica (strain IFM 10152) protein is Glycine dehydrogenase (decarboxylating).